A 531-amino-acid chain; its full sequence is Pescadillo homolog (531 aa).

In terms of domain architecture, BRCT spans Ser-309–Pro-398.

It belongs to the pescadillo family.

It is found in the nucleus. The protein localises to the nucleolus. Its subcellular location is the nucleoplasm. Its function is as follows. Required for maturation of ribosomal RNAs and formation of the large ribosomal subunit. The sequence is that of Pescadillo homolog from Caenorhabditis elegans.